A 1016-amino-acid chain; its full sequence is MPFSLRSTSFCFLACLCSYSYGFASSPQVLTPNVTTPFKGDDVYLNGDCAFVNVYAGAENGSIISANGDNLTITGQNHTLSFTDSQGPVLQNYAFISAGETLTLKDFSSLMFSKNVSCGEKGMISGKTVSISGAGEVIFWDNSVGYSPLSIVPASTPTPPAPAPAPAASSSLSPTVSDARKGSIFSVETSLEISGVKKGVMFDNNAGNFGTVFRGNSNNNAGSGGSGSATTPSFTVKNCKGKVSFTDNVASCGGGVVYKGTVLFKDNEGGIFFRGNTAYDDLGILAATSRDQNTETGGGGGVICSPDDSVKFEGNKGSIVFDYNFAKGRGGSILTKEFSLVADDSVVFSNNTAEKGGGAIYAPTIDISTNGGSILFERNRAAEGGAICVSEASSGSTGNLTLSASDGDIVFSGNMTSDRPGERSAARILSDGTTVSLNASGLSKLIFYDPVVQNNSAAGASTPSPSSSSMPGAVTINQSGNGSVIFTAESLTPSEKLQVLNSTSNFPGALTVSGGELVVTEGATLTTGTITATSGRVTLGSGASLSAVAGAANNNYTCTVSKLGIDLESFLTPNYKTAILGADGTVTVNSGSTLDLVMESEAEVYDNPLFVGSLTIPFVTLSSSSASNGVTKNSVTINDADAAHYGYQGSWSADWTKPPLAPDAKGMVPPNTNNTLYLTWRPASNYGEYRLDPQRKGELVPNSLWVAGSALRTFTNGLKEHYVSRDVGFVASLHALGDYILNYTQDDRDGFLARYGGFQATAASHYENGSIFGVAFGQLYGQTKSRMYYSKDAGNMTMLSCFGRSYVDIKGTETVMYWETAYGYSVHRMHTQYFNDKTQKFDHSKCHWHNNNYYAFVGAEHNFLEYCIPTRQFARDYELTGFMRFEMAGGWSSSTRETGSLTRYFARGSGHNMSLPIGIVAHAVSHVRRSPPSKLTLNMGYRPDIWRVTPHCNMEIIANGVKTPIQGSPLARHAFFLEVHDTLYIHHFGRAYMNYSLDARRRQTAHFVSMGLNRIF.

Positions 1-24 (MPFSLRSTSFCFLACLCSYSYGFA) are cleaved as a signal peptide. Positions 697–1016 (GELVPNSLWV…FVSMGLNRIF (320 aa)) constitute an Autotransporter domain.

This sequence belongs to the PMP outer membrane protein family.

It localises to the secreted. The protein resides in the cell wall. It is found in the cell outer membrane. This is Probable outer membrane protein PmpH (pmpH) from Chlamydia trachomatis serovar D (strain ATCC VR-885 / DSM 19411 / UW-3/Cx).